A 116-amino-acid chain; its full sequence is Ig heavy chain V-A1 region BS-5 (116 aa).

Glutamine 1 carries the pyrrolidone carboxylic acid modification. The Ig-like domain maps to 1–107 (QSVEESGGRL…LVHLAFVDVW (107 aa)).

This Oryctolagus cuniculus (Rabbit) protein is Ig heavy chain V-A1 region BS-5.